Here is a 169-residue protein sequence, read N- to C-terminus: uncharacterized protein (169 aa).

Disordered regions lie at residues 32–53 (VSGPDWNPNTSQPMPGSPAPAP) and 148–169 (VSGSRGREGRLRPQCAGSAGGA).

This is an uncharacterized protein from Homo sapiens (Human).